The primary structure comprises 193 residues: Acyl carrier protein phosphodiesterase (193 aa).

It belongs to the AcpH family.

The enzyme catalyses holo-[ACP] + H2O = apo-[ACP] + (R)-4'-phosphopantetheine + H(+). In terms of biological role, converts holo-ACP to apo-ACP by hydrolytic cleavage of the phosphopantetheine prosthetic group from ACP. This chain is Acyl carrier protein phosphodiesterase, found in Escherichia coli O6:H1 (strain CFT073 / ATCC 700928 / UPEC).